The following is a 90-amino-acid chain: Probable Fe(2+)-trafficking protein (90 aa).

This sequence belongs to the Fe(2+)-trafficking protein family.

Functionally, could be a mediator in iron transactions between iron acquisition and iron-requiring processes, such as synthesis and/or repair of Fe-S clusters in biosynthetic enzymes. This chain is Probable Fe(2+)-trafficking protein, found in Xylella fastidiosa (strain 9a5c).